Here is a 255-residue protein sequence, read N- to C-terminus: Geranylgeranylglyceryl phosphate synthase (255 aa).

Residues Asp-26 and Ser-55 each coordinate Mg(2+). Sn-glycerol 1-phosphate-binding positions include 174–180 (YLEAGSG), 205–206 (GG), and 227–228 (GT).

Belongs to the GGGP/HepGP synthase family. Group II subfamily. Mg(2+) is required as a cofactor.

It is found in the cytoplasm. The enzyme catalyses sn-glycerol 1-phosphate + (2E,6E,10E)-geranylgeranyl diphosphate = sn-3-O-(geranylgeranyl)glycerol 1-phosphate + diphosphate. Its pathway is membrane lipid metabolism; glycerophospholipid metabolism. Its function is as follows. Prenyltransferase that catalyzes the transfer of the geranylgeranyl moiety of geranylgeranyl diphosphate (GGPP) to the C3 hydroxyl of sn-glycerol-1-phosphate (G1P). This reaction is the first ether-bond-formation step in the biosynthesis of archaeal membrane lipids. The sequence is that of Geranylgeranylglyceryl phosphate synthase from Thermococcus sibiricus (strain DSM 12597 / MM 739).